Reading from the N-terminus, the 384-residue chain is MYQAKKMLLLGSGELGKEVVIEAQRLGVVTVAVDSYEHAPAMQAAHKSYVIDMLDKAQVREVIEKEKPDLIVPEVEAIATDELLKLEEEGFHVIPNARAAKLTMDREGIRRLAAETLHLPTAGYEFANTYEEFKEAAETIGFPCVVKPLMSSSGKGQSVCRSASGLKSCWDMAMEGGRVKNGRVIVEEFIPFESEITLLTVRAANGTSFCAPIGHEQKDGDYIESWQPHHMTEQQIKEAKHIAKSITDELGGYGLFGVELFLTEDKVYFSEVSPRPHDTGLVTLVTQNLSEFALHVRAVLGFPIPEITQLSPGASRPLKAPKELADYAVEGLEKALAVKSTQVRVFGKPVTKVGRRMAVALSAAETVEEARERAAEALSHLSIT.

N(1)-(5-phospho-beta-D-ribosyl)glycinamide-binding positions include 14-15 (EL) and E74. Residues R106, K147, 152–157 (SSGKGQ), 187–190 (EEFI), and E195 each bind ATP. One can recognise an ATP-grasp domain in the interval 111–300 (RLAAETLHLP…EFALHVRAVL (190 aa)). Residues E259 and E271 each coordinate Mg(2+). Residues D278, K348, and 355–356 (RR) each bind N(1)-(5-phospho-beta-D-ribosyl)glycinamide.

The protein belongs to the PurK/PurT family. Homodimer.

The enzyme catalyses N(1)-(5-phospho-beta-D-ribosyl)glycinamide + formate + ATP = N(2)-formyl-N(1)-(5-phospho-beta-D-ribosyl)glycinamide + ADP + phosphate + H(+). The protein operates within purine metabolism; IMP biosynthesis via de novo pathway; N(2)-formyl-N(1)-(5-phospho-D-ribosyl)glycinamide from N(1)-(5-phospho-D-ribosyl)glycinamide (formate route): step 1/1. Its function is as follows. Involved in the de novo purine biosynthesis. Catalyzes the transfer of formate to 5-phospho-ribosyl-glycinamide (GAR), producing 5-phospho-ribosyl-N-formylglycinamide (FGAR). Formate is provided by PurU via hydrolysis of 10-formyl-tetrahydrofolate. The protein is Formate-dependent phosphoribosylglycinamide formyltransferase of Bacillus velezensis (strain DSM 23117 / BGSC 10A6 / LMG 26770 / FZB42) (Bacillus amyloliquefaciens subsp. plantarum).